Here is a 999-residue protein sequence, read N- to C-terminus: Probable K(+)/H(+) antiporter subunit A/B (999 aa).

Residues 1 to 20 (MTRPASVLAGPKSRPPIHSQ) form a disordered region. Helical transmembrane passes span 31 to 48 (LLSV…IAIF), 63 to 85 (AIAL…GGVL), 106 to 128 (FAWL…ARYY), 138 to 160 (FFAL…NLIL), 162 to 181 (AVFW…YWHH), 191 to 213 (MALT…IGKI), 233 to 255 (PLYG…QFPF), 270 to 292 (SAYL…FWPV), 299 to 321 (WFWI…AIFQ), 336 to 358 (LGLI…VFHI), 389 to 411 (GLFH…MAGV), 442 to 464 (YVAT…GVFF), 488 to 510 (FLVL…FLHT), 530 to 552 (GWNI…YFLM), 604 to 621 (RLLV…LLLG), 636 to 653 (AFAL…GSAY), 660 to 682 (LASL…WLSA), 686 to 708 (AVTQ…RWLP), 729 to 751 (LRDL…TVMT), 788 to 807 (TLGE…ALLL), 846 to 868 (FIPA…FLFL), 878 to 900 (FAAG…TRWV), 913 to 935 (SIGL…PFLT), and 955 to 977 (ILFD…IALA).

It in the N-terminal section; belongs to the CPA3 antiporters (TC 2.A.63) subunit A family. The protein in the C-terminal section; belongs to the CPA3 antiporters (TC 2.A.63) subunit B family. In terms of assembly, may form a heterooligomeric complex that consists of six subunits: PhaAB, PhaC, PhaD, PhaE, PhaF and PhaG.

The protein resides in the cell membrane. In terms of biological role, part of a K(+) efflux system which is required for the adaptation of R.meliloti to alkaline pH as well as for the infection process during symbiotic nodule development. The protein is Probable K(+)/H(+) antiporter subunit A/B (phaAB) of Rhizobium meliloti (strain 1021) (Ensifer meliloti).